The chain runs to 188 residues: UPF0200 protein M164_1169 (188 aa).

15 to 22 (GMPGSGKS) serves as a coordination point for ATP.

This sequence belongs to the UPF0200 family.

This is UPF0200 protein M164_1169 from Saccharolobus islandicus (strain M.16.4 / Kamchatka #3) (Sulfolobus islandicus).